The following is a 243-amino-acid chain: Probable transcriptional regulatory protein Ldb0677 (243 aa).

The tract at residues 1–22 is disordered; it reads MSGHSKWHNIQGRKNAQDAKRG.

This sequence belongs to the TACO1 family.

It localises to the cytoplasm. The sequence is that of Probable transcriptional regulatory protein Ldb0677 from Lactobacillus delbrueckii subsp. bulgaricus (strain ATCC 11842 / DSM 20081 / BCRC 10696 / JCM 1002 / NBRC 13953 / NCIMB 11778 / NCTC 12712 / WDCM 00102 / Lb 14).